The primary structure comprises 236 residues: Small ribosomal subunit protein uS2c (236 aa).

Belongs to the universal ribosomal protein uS2 family.

It localises to the plastid. It is found in the chloroplast. The protein is Small ribosomal subunit protein uS2c (rps2) of Nandina domestica (Heavenly bamboo).